Reading from the N-terminus, the 500-residue chain is Cytochrome P450 CYP736A12 (500 aa).

The chain crosses the membrane as a helical span at residues 4–24 (LAYPLLFVLLGALSWWILPII). Cysteine 442 contributes to the heme binding site.

Belongs to the cytochrome P450 family. The cofactor is heme.

The protein localises to the membrane. Probable heme-thiolate monooxygenase. In Panax ginseng (Korean ginseng), this protein is Cytochrome P450 CYP736A12.